Here is a 179-residue protein sequence, read N- to C-terminus: Adenine phosphoribosyltransferase (179 aa).

This sequence belongs to the purine/pyrimidine phosphoribosyltransferase family. As to quaternary structure, homodimer.

It is found in the cytoplasm. The enzyme catalyses AMP + diphosphate = 5-phospho-alpha-D-ribose 1-diphosphate + adenine. It participates in purine metabolism; AMP biosynthesis via salvage pathway; AMP from adenine: step 1/1. Functionally, catalyzes a salvage reaction resulting in the formation of AMP, that is energically less costly than de novo synthesis. In Ruegeria pomeroyi (strain ATCC 700808 / DSM 15171 / DSS-3) (Silicibacter pomeroyi), this protein is Adenine phosphoribosyltransferase.